Here is a 326-residue protein sequence, read N- to C-terminus: Polyprenal reductase (326 aa).

5 helical membrane-spanning segments follow: residues 26–46 (MMFGTFIATIVFFGGLMTFVE), 84–104 (HFYTFALFWSWLAFYVLVSTV), 167–187 (INLSHYAVGYVHYFGAVIALL), 212–232 (ILYLGVFFLAWQQQYASNMIL), and 256–276 (LFNLLSSPHMFLEVVMYFCIA).

This sequence belongs to the steroid 5-alpha reductase family. Polyprenal reductase subfamily.

The protein resides in the endoplasmic reticulum membrane. It carries out the reaction a di-trans,poly-cis-dolichal + NADP(+) = a di-trans,poly-cis-polyprenal + NADPH + H(+). Its pathway is protein modification; protein glycosylation. Functionally, plays a key role in early steps of protein N-linked glycosylation by being involved in the conversion of polyprenol into dolichol. Acts as a polyprenal reductase that mediates the reduction of polyprenal into dolichal in a NADP-dependent mechanism. Dolichols are required for the synthesis of dolichol-linked monosaccharides and the oligosaccharide precursor used for N-glycosylation. The polypeptide is Polyprenal reductase (Drosophila melanogaster (Fruit fly)).